We begin with the raw amino-acid sequence, 329 residues long: Prostaglandin reductase 1 (329 aa).

Thr18 carries the post-translational modification Phosphothreonine. Phosphoserine is present on Ser20. Residues 152-155 (GAVG), Lys178, Tyr193, Asn217, 239-245 (CGAISQY), 270-272 (FIV), and Asn321 each bind NADP(+). Lys178 bears the N6-(2-hydroxyisobutyryl)lysine; alternate mark. Lys178 carries the N6-acetyllysine; alternate modification.

It belongs to the NADP-dependent oxidoreductase L4BD family. As to quaternary structure, monomer or homodimer.

It localises to the cytoplasm. The enzyme catalyses 13,14-dihydro-15-oxo-prostaglandin E1 + NADP(+) = 15-oxoprostaglandin E1 + NADPH + H(+). The catalysed reaction is 13,14-dihydro-15-oxo-prostaglandin E2 + NADP(+) = 15-oxoprostaglandin E2 + NADPH + H(+). It catalyses the reaction 13,14-dihydro-15-oxo-prostaglandin F1alpha + NADP(+) = 15-oxoprostaglandin F1alpha + NADPH + H(+). It carries out the reaction 13,14-dihydro-15-oxo-PGF2alpha + NADP(+) = 15-oxoprostaglandin F2alpha + NADPH + H(+). The enzyme catalyses leukotriene B4 + NADP(+) = 12-oxo-leukotriene B4 + NADPH + H(+). The catalysed reaction is 20-hydroxy-leukotriene B4 + NADP(+) = 12-oxo-20-hydroxy-leukotriene B4 + NADPH + H(+). It catalyses the reaction 6-trans-leukotriene B4 + NADP(+) = 12-oxo-(5S)-hydroxy-(6E,8E,10E,14Z)-eicosatetraenoate + NADPH + H(+). It carries out the reaction (5S,12S)-dihydroxy-(6E,10E,12E,14Z)-eicosatetraenoate + NADP(+) = 12-oxo-(5S)-hydroxy-(6E,8E,10E,14Z)-eicosatetraenoate + NADPH + H(+). The enzyme catalyses an n-alkanal + NADP(+) = an alk-2-enal + NADPH + H(+). The catalysed reaction is hexanal + NADP(+) = (E)-hex-2-enal + NADPH + H(+). It catalyses the reaction octanal + NADP(+) = (2E)-octenal + NADPH + H(+). It carries out the reaction decanal + NADP(+) = (2E)-decenal + NADPH + H(+). The enzyme catalyses dodecanal + NADP(+) = (2E)-dodecenal + NADPH + H(+). The catalysed reaction is 4-hydroxynonanal + NADP(+) = (E)-4-hydroxynon-2-enal + NADPH + H(+). It catalyses the reaction pentan-2-one + NADP(+) = (E)-pent-3-en-2-one + NADPH + H(+). It carries out the reaction nonan-2-one + NADP(+) = (3E)-nonen-2-one + NADPH + H(+). NAD(P)H-dependent oxidoreductase involved in metabolic inactivation of pro- and anti-inflammatory eicosanoids: prostaglandins (PG), leukotrienes (LT) and lipoxins (LX). Catalyzes with high efficiency the reduction of the 13,14 double bond of 15-oxoPGs, including 15-oxo-PGE1, 15-oxo-PGE2, 15-oxo-PGF1-alpha and 15-oxo-PGF2-alpha. Catalyzes with lower efficiency the oxidation of the hydroxyl group at C12 of LTB4 and its derivatives, converting them into biologically less active 12-oxo-LTB4 metabolites. Reduces 15-oxo-LXA4 to 13,14 dihydro-15-oxo-LXA4, enhancing neutrophil recruitment at the inflammatory site. Plays a role in metabolic detoxification of alkenals and ketones. Reduces alpha,beta-unsaturated alkenals and ketones, particularly those with medium-chain length, showing highest affinity toward (2E)-decenal and (3E)-3-nonen-2-one. Inactivates 4-hydroxy-2-nonenal, a cytotoxic lipid constituent of oxidized low-density lipoprotein particles. This chain is Prostaglandin reductase 1 (Ptgr1), found in Rattus norvegicus (Rat).